The following is a 197-amino-acid chain: Putative peptidyl-prolyl cis-trans isomerase (197 aa).

The 182-residue stretch at 14–195 (GEIKVVMHTN…HDVVIESIDV (182 aa)) folds into the PPIase cyclophilin-type domain.

Belongs to the cyclophilin-type PPIase family.

The catalysed reaction is [protein]-peptidylproline (omega=180) = [protein]-peptidylproline (omega=0). Functionally, PPIases accelerate the folding of proteins. It catalyzes the cis-trans isomerization of proline imidic peptide bonds in oligopeptides. The sequence is that of Putative peptidyl-prolyl cis-trans isomerase from Staphylococcus aureus (strain COL).